A 546-amino-acid polypeptide reads, in one-letter code: Methionine--tRNA ligase (546 aa).

The 'HIGH' region signature appears at 15–25; that stretch reads PYANGPIHLGH. Residues Cys146, Cys149, Cys159, and Cys162 each coordinate Zn(2+). The 'KMSKS' region signature appears at 332-336; that stretch reads KMSKS. Residue Lys335 participates in ATP binding.

Belongs to the class-I aminoacyl-tRNA synthetase family. MetG type 1 subfamily. In terms of assembly, monomer. Requires Zn(2+) as cofactor.

Its subcellular location is the cytoplasm. The enzyme catalyses tRNA(Met) + L-methionine + ATP = L-methionyl-tRNA(Met) + AMP + diphosphate. Its function is as follows. Is required not only for elongation of protein synthesis but also for the initiation of all mRNA translation through initiator tRNA(fMet) aminoacylation. This Coxiella burnetii (strain Dugway 5J108-111) protein is Methionine--tRNA ligase.